Consider the following 837-residue polypeptide: Outer membrane usher protein HifC (837 aa).

The first 26 residues, 1 to 26, serve as a signal peptide directing secretion; that stretch reads MKTKNFPLNKIAFACTLLLANPVAWA. The cysteines at positions 813 and 833 are disulfide-linked.

Belongs to the fimbrial export usher family.

It is found in the cell outer membrane. Its function is as follows. Essential for piliation. This chain is Outer membrane usher protein HifC (hifC), found in Haemophilus influenzae.